The primary structure comprises 612 residues: Phosphopentomutase (612 aa).

A2 carries the post-translational modification N-acetylalanine. Alpha-D-glucose 1,6-bisphosphate contacts are provided by R63 and S165. S165 functions as the Phosphoserine intermediate in the catalytic mechanism. Residues S165, D322, D324, and D326 each coordinate Mg(2+). Phosphoserine is present on S165. Positions 326, 327, 400, 424, and 438 each coordinate alpha-D-glucose 1,6-bisphosphate.

The protein belongs to the phosphohexose mutase family. As to quaternary structure, monomer. Requires Mg(2+) as cofactor.

The protein resides in the cytoplasm. Its subcellular location is the cytosol. It catalyses the reaction alpha-D-ribose 1-phosphate = D-ribose 5-phosphate. The catalysed reaction is 2-deoxy-alpha-D-ribose 1-phosphate = 2-deoxy-D-ribose 5-phosphate. The enzyme catalyses alpha-D-glucose 1-phosphate = alpha-D-glucose 6-phosphate. It carries out the reaction O-phospho-L-seryl-[protein] + alpha-D-glucose 1-phosphate = alpha-D-glucose 1,6-bisphosphate + L-seryl-[protein]. It catalyses the reaction alpha-D-glucose 1,6-bisphosphate + L-seryl-[protein] = O-phospho-L-seryl-[protein] + alpha-D-glucose 6-phosphate. Functionally, catalyzes the conversion of the nucleoside breakdown products ribose-1-phosphate and deoxyribose-1-phosphate to the corresponding 5-phosphopentoses. Catalyzes the reversible isomerization of alpha-D-glucose 1-phosphate to alpha-D-glucose 6-phosphate but with a lower catalytic efficiency. The mechanism proceeds via the intermediate compound alpha-D-glucose 1,6-bisphosphate. In vitro, also has a low glucose 1,6-bisphosphate synthase activity which is most probably not physiologically relevant. This is Phosphopentomutase (PGM2) from Pongo abelii (Sumatran orangutan).